The following is a 340-amino-acid chain: DNA repair protein RAD51 homolog B (340 aa).

The interval 1 to 22 is disordered; it reads MSSSSAHQKASPPIEEEATEHG. One can recognise a HhH domain in the interval 49–78; the sequence is TVESVAYSPRKDLLQIKGISEAKVDKIIEA. 128–135 contacts ATP; that stretch reads GEFRSGKT.

It belongs to the RecA family. RAD51 subfamily. In terms of assembly, self-associates and may interact with XRCC3 homolog. As to expression, highly expressed in mitotic and meiotic tissues, but low levels in differentiated tissues.

It is found in the nucleus. Its function is as follows. Binds to single and double-stranded DNA and exhibits DNA-dependent ATPase activity. Unwinds duplex DNA. Component of the meiotic recombination pathway. Seems to play a role in mediating chromosome homology search, chromosome pairing and synapsis at early stages and probably chromosome crossing-over at later stages in meiosis. Probably is involved in the repair of meiotic double strand breaks (DBSs) and in homologous recombination. The polypeptide is DNA repair protein RAD51 homolog B (RAD51B) (Zea mays (Maize)).